The following is a 603-amino-acid chain: uncharacterized protein (603 aa).

The interval 257-281 is disordered; the sequence is AGEAASSDHDQKISRVTRKRPREPK.

This is an uncharacterized protein from Saccharomyces cerevisiae (strain ATCC 204508 / S288c) (Baker's yeast).